A 158-amino-acid chain; its full sequence is SsrA-binding protein (158 aa).

Basic and acidic residues predominate over residues 136–151 (KRADSKSRDWARDKQR). Positions 136–158 (KRADSKSRDWARDKQRIMKHSTR) are disordered.

It belongs to the SmpB family.

The protein resides in the cytoplasm. Its function is as follows. Required for rescue of stalled ribosomes mediated by trans-translation. Binds to transfer-messenger RNA (tmRNA), required for stable association of tmRNA with ribosomes. tmRNA and SmpB together mimic tRNA shape, replacing the anticodon stem-loop with SmpB. tmRNA is encoded by the ssrA gene; the 2 termini fold to resemble tRNA(Ala) and it encodes a 'tag peptide', a short internal open reading frame. During trans-translation Ala-aminoacylated tmRNA acts like a tRNA, entering the A-site of stalled ribosomes, displacing the stalled mRNA. The ribosome then switches to translate the ORF on the tmRNA; the nascent peptide is terminated with the 'tag peptide' encoded by the tmRNA and targeted for degradation. The ribosome is freed to recommence translation, which seems to be the essential function of trans-translation. This Photobacterium profundum (strain SS9) protein is SsrA-binding protein.